The chain runs to 642 residues: Arginine--tRNA ligase, chloroplastic/mitochondrial (642 aa).

The transit peptide at 1–53 (MFIFPKDENRRETLTTKLRFSADHLTFTTVTEKLRATAWRFAFSSRAKSVVAM) directs the protein to the chloroplast and mitochondrion. Ala54 carries the N-acetylalanine modification. Positions 190-201 (PNIAKEMHVGHL) match the 'HIGH' region motif.

This sequence belongs to the class-I aminoacyl-tRNA synthetase family.

It localises to the plastid. The protein resides in the chloroplast. Its subcellular location is the mitochondrion. It catalyses the reaction tRNA(Arg) + L-arginine + ATP = L-arginyl-tRNA(Arg) + AMP + diphosphate. Forms part of a macromolecular complex that catalyzes the attachment of specific amino acids to cognate tRNAs during protein synthesis. The polypeptide is Arginine--tRNA ligase, chloroplastic/mitochondrial (Arabidopsis thaliana (Mouse-ear cress)).